The sequence spans 116 residues: Large ribosomal subunit protein bL17 (116 aa).

The protein belongs to the bacterial ribosomal protein bL17 family. Part of the 50S ribosomal subunit. Contacts protein L32.

The chain is Large ribosomal subunit protein bL17 from Helicobacter hepaticus (strain ATCC 51449 / 3B1).